Here is a 292-residue protein sequence, read N- to C-terminus: Sulfofructosephosphate aldolase (292 aa).

Lys193 functions as the Schiff-base intermediate with substrate in the catalytic mechanism.

Belongs to the aldolase LacD family. Homotetramer.

It carries out the reaction 6-deoxy-6-sulfo-D-fructose 1-phosphate = (2S)-3-sulfolactaldehyde + dihydroxyacetone phosphate. Its function is as follows. Cleaves 6-deoxy-6-sulfo-D-fructose 1-phosphate (SFP) to form dihydroxyacetone phosphate (DHAP) and 3-sulfolactaldehyde (SLA). Can also catalyze the reverse reaction. The chain is Sulfofructosephosphate aldolase (yihT) from Salmonella typhimurium (strain LT2 / SGSC1412 / ATCC 700720).